The primary structure comprises 119 residues: Beta-2-microglobulin (119 aa).

Residues 1–20 (MARFVVVALLVQLSLFGLEA) form the signal peptide. Positions 25 to 114 (PKIQVYSRYP…VTFSTPKTVK (90 aa)) constitute an Ig-like C1-type domain. Cysteine 45 and cysteine 100 are oxidised to a cystine.

This sequence belongs to the beta-2-microglobulin family. In terms of assembly, heterodimer of an alpha chain and a beta chain. Beta-2-microglobulin is the beta-chain of major histocompatibility complex class I molecules.

The protein resides in the secreted. Its function is as follows. Component of the class I major histocompatibility complex (MHC). Involved in the presentation of peptide antigens to the immune system. The sequence is that of Beta-2-microglobulin (B2M) from Saguinus imperator (Emperor tamarin).